Here is a 429-residue protein sequence, read N- to C-terminus: Enolase (429 aa).

Gln-163 provides a ligand contact to (2R)-2-phosphoglycerate. Glu-205 (proton donor) is an active-site residue. Residues Asp-242, Glu-285, and Asp-312 each coordinate Mg(2+). The (2R)-2-phosphoglycerate site is built by Lys-337, Arg-366, Ser-367, and Lys-388. The Proton acceptor role is filled by Lys-337.

This sequence belongs to the enolase family. The cofactor is Mg(2+).

The protein localises to the cytoplasm. It localises to the secreted. The protein resides in the cell surface. The catalysed reaction is (2R)-2-phosphoglycerate = phosphoenolpyruvate + H2O. The protein operates within carbohydrate degradation; glycolysis; pyruvate from D-glyceraldehyde 3-phosphate: step 4/5. Catalyzes the reversible conversion of 2-phosphoglycerate (2-PG) into phosphoenolpyruvate (PEP). It is essential for the degradation of carbohydrates via glycolysis. The polypeptide is Enolase (Methylorubrum extorquens (strain PA1) (Methylobacterium extorquens)).